Reading from the N-terminus, the 212-residue chain is Ribosomal RNA small subunit methyltransferase G (212 aa).

S-adenosyl-L-methionine-binding positions include glycine 80, leucine 85, alanine 131 to glutamate 132, and arginine 146.

It belongs to the methyltransferase superfamily. RNA methyltransferase RsmG family.

It is found in the cytoplasm. The enzyme catalyses guanosine(527) in 16S rRNA + S-adenosyl-L-methionine = N(7)-methylguanosine(527) in 16S rRNA + S-adenosyl-L-homocysteine. Specifically methylates the N7 position of guanine in position 527 of 16S rRNA. This is Ribosomal RNA small subunit methyltransferase G from Xanthomonas campestris pv. campestris (strain B100).